Consider the following 476-residue polypeptide: Sulfate adenylyltransferase subunit 1 (476 aa).

A tr-type G domain is found at 17-232 (KDLLRLLTAG…LETVHIDSDN (216 aa)). The segment at 26–33 (GSVDDGKS) is G1. 26–33 (GSVDDGKS) contributes to the GTP binding site. Residues 84-88 (GITID) are G2. A G3 region spans residues 105–108 (DTPG). GTP is bound by residues 105-109 (DTPGH) and 160-163 (NKMD). The G4 stretch occupies residues 160–163 (NKMD). The interval 197–199 (SAL) is G5.

Belongs to the TRAFAC class translation factor GTPase superfamily. Classic translation factor GTPase family. CysN/NodQ subfamily. In terms of assembly, heterodimer composed of CysD, the smaller subunit, and CysN.

The catalysed reaction is sulfate + ATP + H(+) = adenosine 5'-phosphosulfate + diphosphate. It functions in the pathway sulfur metabolism; hydrogen sulfide biosynthesis; sulfite from sulfate: step 1/3. In terms of biological role, with CysD forms the ATP sulfurylase (ATPS) that catalyzes the adenylation of sulfate producing adenosine 5'-phosphosulfate (APS) and diphosphate, the first enzymatic step in sulfur assimilation pathway. APS synthesis involves the formation of a high-energy phosphoric-sulfuric acid anhydride bond driven by GTP hydrolysis by CysN coupled to ATP hydrolysis by CysD. The sequence is that of Sulfate adenylyltransferase subunit 1 from Bacteroides fragilis (strain YCH46).